A 566-amino-acid polypeptide reads, in one-letter code: 5'-AMP-activated protein kinase subunit gamma-2 (566 aa).

Positions M1–P198 are disordered. Over residues S15–N25 the composition is skewed to low complexity. The segment covering N54–D64 has biased composition (basic and acidic residues). S65, S71, S73, S90, S138, S143, S158, S161, and S162 each carry phosphoserine. 2 stretches are compositionally biased toward low complexity: residues K132–P144 and T156–Q172. T165 is modified (phosphothreonine). Positions Y180–S189 are enriched in basic and acidic residues. At S196 the chain carries Phosphoserine. CBS domains follow at residues P272–M332, T354–M412, and I427–I489. ADP contacts are provided by residues R299, M314–D319, V359, H380–R381, and K399. AMP is bound by residues R299, M314–D319, V359, H380, H380–R381, K399, T429, A434, S455–A456, S471–D474, R498, H527, H527–R528, and S543–D546. ATP is bound by residues R299, M314–D319, V359, H380–R381, R381, and K399. The short motif at L367–I388 is the AMPK pseudosubstrate element. ADP contacts are provided by residues S471–D474, R498, and H527–R528. ATP-binding positions include S471–D474, R498, and H527–R528. Positions Y501–K559 constitute a CBS 4 domain.

Belongs to the 5'-AMP-activated protein kinase gamma subunit family. In terms of assembly, AMPK is a heterotrimer of an alpha catalytic subunit (PRKAA1 or PRKAA2), a beta (PRKAB1 or PRKAB2) and a gamma non-catalytic subunits (PRKAG1, PRKAG2 or PRKAG3). Interacts with FNIP1 and FNIP2. In terms of processing, phosphorylated by ULK1; leading to negatively regulate AMPK activity and suggesting the existence of a regulatory feedback loop between ULK1 and AMPK. Glycosylated; O-GlcNAcylated by OGT, promoting the AMP-activated protein kinase (AMPK) activity.

Its function is as follows. AMP/ATP-binding subunit of AMP-activated protein kinase (AMPK), an energy sensor protein kinase that plays a key role in regulating cellular energy metabolism. In response to reduction of intracellular ATP levels, AMPK activates energy-producing pathways and inhibits energy-consuming processes: inhibits protein, carbohydrate and lipid biosynthesis, as well as cell growth and proliferation. AMPK acts via direct phosphorylation of metabolic enzymes, and by longer-term effects via phosphorylation of transcription regulators. Also acts as a regulator of cellular polarity by remodeling the actin cytoskeleton; probably by indirectly activating myosin. Gamma non-catalytic subunit mediates binding to AMP, ADP and ATP, leading to activate or inhibit AMPK: AMP-binding results in allosteric activation of alpha catalytic subunit (PRKAA1 or PRKAA2) both by inducing phosphorylation and preventing dephosphorylation of catalytic subunits. ADP also stimulates phosphorylation, without stimulating already phosphorylated catalytic subunit. ATP promotes dephosphorylation of catalytic subunit, rendering the AMPK enzyme inactive. This Mus musculus (Mouse) protein is 5'-AMP-activated protein kinase subunit gamma-2 (Prkag2).